A 397-amino-acid chain; its full sequence is 1-deoxy-D-xylulose 5-phosphate reductoisomerase (397 aa).

Residues Thr-12, Gly-13, Ser-14, Ile-15, Gly-38, Lys-39, Asn-40, and Asn-126 each contribute to the NADPH site. 1-deoxy-D-xylulose 5-phosphate is bound at residue Lys-127. An NADPH-binding site is contributed by Glu-128. Asp-152 provides a ligand contact to Mn(2+). 4 residues coordinate 1-deoxy-D-xylulose 5-phosphate: Ser-153, Glu-154, Ser-188, and His-211. Residue Glu-154 coordinates Mn(2+). NADPH is bound at residue Gly-217. Residues Ser-224, Asn-229, Lys-230, and Glu-233 each coordinate 1-deoxy-D-xylulose 5-phosphate. Glu-233 serves as a coordination point for Mn(2+).

The protein belongs to the DXR family. It depends on Mg(2+) as a cofactor. The cofactor is Mn(2+).

The enzyme catalyses 2-C-methyl-D-erythritol 4-phosphate + NADP(+) = 1-deoxy-D-xylulose 5-phosphate + NADPH + H(+). The protein operates within isoprenoid biosynthesis; isopentenyl diphosphate biosynthesis via DXP pathway; isopentenyl diphosphate from 1-deoxy-D-xylulose 5-phosphate: step 1/6. Its function is as follows. Catalyzes the NADPH-dependent rearrangement and reduction of 1-deoxy-D-xylulose-5-phosphate (DXP) to 2-C-methyl-D-erythritol 4-phosphate (MEP). In Haemophilus influenzae (strain PittEE), this protein is 1-deoxy-D-xylulose 5-phosphate reductoisomerase.